We begin with the raw amino-acid sequence, 106 residues long: ATP-dependent Clp protease adapter protein ClpS (106 aa).

Belongs to the ClpS family. In terms of assembly, binds to the N-terminal domain of the chaperone ClpA.

Its function is as follows. Involved in the modulation of the specificity of the ClpAP-mediated ATP-dependent protein degradation. The sequence is that of ATP-dependent Clp protease adapter protein ClpS from Escherichia coli O139:H28 (strain E24377A / ETEC).